Here is a 239-residue protein sequence, read N- to C-terminus: Small ribosomal subunit protein uS2c (239 aa).

This sequence belongs to the universal ribosomal protein uS2 family.

The protein localises to the plastid. The protein is Small ribosomal subunit protein uS2c (rps2) of Aneura mirabilis (Parasitic liverwort).